The following is a 267-amino-acid chain: tRNA pseudouridine synthase A (267 aa).

Residue D52 is the Nucleophile of the active site. A substrate-binding site is contributed by Y113.

It belongs to the tRNA pseudouridine synthase TruA family. Homodimer.

The enzyme catalyses uridine(38/39/40) in tRNA = pseudouridine(38/39/40) in tRNA. Its function is as follows. Formation of pseudouridine at positions 38, 39 and 40 in the anticodon stem and loop of transfer RNAs. This chain is tRNA pseudouridine synthase A, found in Chlamydia pneumoniae (Chlamydophila pneumoniae).